We begin with the raw amino-acid sequence, 341 residues long: Cell wall mannoprotein PIR1 (341 aa).

Residues 1-18 form the signal peptide; that stretch reads MQYKKSLVASALVATSLA. A propeptide spanning residues 19–63 is cleaved from the precursor; the sequence is AYAPKDPWSTLTPSATYKGGITDYSSTFGIAVEPIATTASSKAKR. PIR1/2/3 repeat units lie at residues 64-82, 83-101, 102-125, 126-144, 145-163, 164-182, 183-201, and 202-220; these read AAAI…TKTT, AAAV…TKTK, AAAV…AKTT, AAAV…TKTT, AAAV…TNTT, and VAPV…TLTS.

Belongs to the PIR protein family. In terms of processing, covalently linked to beta-1,3-glucan of the inner cell wall layer via an alkali-sensitive ester linkage between the gamma-carboxyl group of glutamic acids, arising from specific glutamines within the PIR1/2/3 repeats, and hydroxyl groups of glucoses of beta-1,3-glucan chains. Post-translationally, O-glycosylated. Extensively O-mannosylated.

Its subcellular location is the secreted. The protein resides in the cell wall. Component of the outer cell wall layer. Required for stability of the cell wall and for optimal growth. Required for resistance against several antifungal and cell wall-perturbing agents and for tolerance to heat shock. This is Cell wall mannoprotein PIR1 (PIR1) from Saccharomyces cerevisiae (strain ATCC 204508 / S288c) (Baker's yeast).